A 327-amino-acid chain; its full sequence is Prenyl transferase janC (327 aa).

A helical membrane pass occupies residues 3–23 (FPGAGPILGAIAVSSCLYFLF). 2 residues coordinate isopentenyl diphosphate: Lys-63 and His-96. 2 residues coordinate Mg(2+): Asp-103 and Asp-107. 2 residues coordinate dimethylallyl diphosphate: Arg-112 and Lys-196. Asn-211 is a glycosylation site (N-linked (GlcNAc...) asparagine).

It belongs to the FPP/GGPP synthase family.

It is found in the membrane. Its pathway is secondary metabolite biosynthesis. Prenyl transferase; part of the gene cluster that mediates the biosynthesis of the indole diterpenes janthitremanes such as shearinine K or shearinine A. The geranylgeranyl diphosphate (GGPP) synthase janG catalyzes the first step in janthitremane biosynthesis via conversion of farnesyl pyrophosphate and isopentyl pyrophosphate into geranylgeranyl pyrophosphate (GGPP). Condensation of indole-3-glycerol phosphate with GGPP by the prenyl transferase janC then forms 3-geranylgeranylindole (3-GGI). Epoxidation by the FAD-dependent monooxygenase janM leads to a epoxidized-GGI that is substrate of the terpene cyclase janB for cyclization to yield paspaline. Paspaline is subsequently converted to 13-desoxypaspaline by the cytochrome P450 monooxygenase janP, via beta-PC-M6 in a series of alpha-face oxidations. The cytochrome P450 monooxygenase janQ is proposed to carry out sequential beta-face oxidation steps at C-7 and C-13 of 13-desoxypaspaline to form paspalicine and paspalinine respectively. The indole diterpene prenyltransferase janD may then convert paspalinine into shearinine K which is substrate of janO and/or additional enzymes for oxidation and cyclization to generate shearinine A. The sequence is that of Prenyl transferase janC from Penicillium janthinellum (Penicillium vitale).